Reading from the N-terminus, the 287-residue chain is Homoserine kinase (287 aa).

78–88 (PLSRGLGSSST) lines the ATP pocket.

It belongs to the GHMP kinase family. Homoserine kinase subfamily.

The protein localises to the cytoplasm. The enzyme catalyses L-homoserine + ATP = O-phospho-L-homoserine + ADP + H(+). It participates in amino-acid biosynthesis; L-threonine biosynthesis; L-threonine from L-aspartate: step 4/5. Its function is as follows. Catalyzes the ATP-dependent phosphorylation of L-homoserine to L-homoserine phosphate. The sequence is that of Homoserine kinase from Lactobacillus gasseri (strain ATCC 33323 / DSM 20243 / BCRC 14619 / CIP 102991 / JCM 1131 / KCTC 3163 / NCIMB 11718 / NCTC 13722 / AM63).